The primary structure comprises 428 residues: Tyrosine--tRNA ligase (428 aa).

Tyr-41 contacts L-tyrosine. The short motif at 46–55 is the 'HIGH' region element; it reads PTADSLHLGH. Positions 179 and 183 each coordinate L-tyrosine. The 'KMSKS' region signature appears at 239 to 243; that stretch reads KFGKT. Lys-242 provides a ligand contact to ATP. Positions 361 to 418 constitute an S4 RNA-binding domain; it reads ADLMQALVDSELQPSRGQARKTIASNAITINGEKQSDPEYTFSDSDRLFGRYTLLRRG.

This sequence belongs to the class-I aminoacyl-tRNA synthetase family. TyrS type 1 subfamily. In terms of assembly, homodimer.

It is found in the cytoplasm. It catalyses the reaction tRNA(Tyr) + L-tyrosine + ATP = L-tyrosyl-tRNA(Tyr) + AMP + diphosphate + H(+). Its function is as follows. Catalyzes the attachment of tyrosine to tRNA(Tyr) in a two-step reaction: tyrosine is first activated by ATP to form Tyr-AMP and then transferred to the acceptor end of tRNA(Tyr). This Cronobacter sakazakii (strain ATCC BAA-894) (Enterobacter sakazakii) protein is Tyrosine--tRNA ligase.